The chain runs to 720 residues: Engulfment and cell motility protein 2 (720 aa).

Position 48 is a phosphotyrosine (tyrosine 48). The 175-residue stretch at 311 to 485 (AQRDIIFELR…VVREQITRAL (175 aa)) folds into the ELMO domain. A Phosphoserine modification is found at serine 503. A PH domain is found at 553–674 (SSFRKIGNRR…LLGKDMSSEL (122 aa)). An SH3-binding motif is present at residues 700–707 (PEAPPPIP). Phosphotyrosine is present on tyrosine 717.

As to quaternary structure, interacts with the SH3-domain of DOCK1 via its SH3-binding site. Probably part of a complex with DOCK1 and RAC1. Probably part of a complex with DOCK1 and CRK isoform CRK-II. Interacts with ARHGEF16, DOCK4 and EPHA2; mediates activation of RAC1 by EPHA2. Interacts with ADGRB3. Interacts with AUTS2; the interaction is direct. As to expression, widely expressed, with a higher expression in skeletal muscle, kidney and placenta.

It is found in the cytoplasm. The protein localises to the cytosol. Its subcellular location is the membrane. Involved in cytoskeletal rearrangements required for phagocytosis of apoptotic cells and cell motility. Acts in association with DOCK1 and CRK. Was initially proposed to be required in complex with DOCK1 to activate Rac Rho small GTPases. May enhance the guanine nucleotide exchange factor (GEF) activity of DOCK1. The polypeptide is Engulfment and cell motility protein 2 (ELMO2) (Homo sapiens (Human)).